Consider the following 406-residue polypeptide: Putative nickel insertion protein (406 aa).

It belongs to the LarC family.

In Methanosphaera stadtmanae (strain ATCC 43021 / DSM 3091 / JCM 11832 / MCB-3), this protein is Putative nickel insertion protein.